We begin with the raw amino-acid sequence, 152 residues long: Fibroblast growth factor 1 (152 aa).

Alanine 2 is subject to N-acetylalanine. The propeptide occupies 2–15 (AEGEITTFTALTEK). Asparagine 33 contributes to the heparin binding site. The interval 127–143 (KKNGSCKRGPRTHYGQK) is heparin-binding.

Belongs to the heparin-binding growth factors family. As to quaternary structure, monomer. Homodimer. Interacts with FGFR1, FGFR2, FGFR3 and FGFR4. Affinity between fibroblast growth factors (FGFs) and their receptors is increased by heparan sulfate glycosaminoglycans that function as coreceptors. Found in a complex with FGFBP1, FGF1 and FGF2. Interacts with FGFBP1. Part of a Cu(2+)-dependent multiprotein aggregate containing FGF1, S100A13 and SYT1. Interacts with SYT1. Interacts with S100A13. Interacts with LRRC59. Interacts with CSNKA, CSNKB and FIBP. While binding with LRRC59, CSNKA and FIBP seem mutually exclusive, CSNKB and FIBP may cooperatively interact with FGF1. Forms a ternary complex with FGFR1 and ITGAV:ITGB3 and induces the recruitment of PTPN11 to the complex. Post-translationally, in the nucleus, phosphorylated by PKC/PRKCD.

The protein resides in the secreted. It localises to the cytoplasm. It is found in the cell cortex. Its subcellular location is the cytosol. The protein localises to the nucleus. Functionally, plays an important role in the regulation of cell survival, cell division, angiogenesis, cell differentiation and cell migration. Functions as a potent mitogen in vitro. Acts as a ligand for FGFR1 and integrins. Binds to FGFR1 in the presence of heparin leading to FGFR1 dimerization and activation via sequential autophosphorylation on tyrosine residues which act as docking sites for interacting proteins, leading to the activation of several signaling cascades. Binds to integrin ITGAV:ITGB3. Its binding to integrin, subsequent ternary complex formation with integrin and FGFR1, and the recruitment of PTPN11 to the complex are essential for FGF1 signaling. Induces the phosphorylation and activation of FGFR1, FRS2, MAPK3/ERK1, MAPK1/ERK2 and AKT1. Can induce angiogenesis. This is Fibroblast growth factor 1 (FGF1) from Sus scrofa (Pig).